A 470-amino-acid polypeptide reads, in one-letter code: Methylenetetrahydrofolate--tRNA-(uracil-5-)-methyltransferase TrmFO (470 aa).

10–15 (GAGLAG) serves as a coordination point for FAD.

Belongs to the MnmG family. TrmFO subfamily. It depends on FAD as a cofactor.

It is found in the cytoplasm. The catalysed reaction is uridine(54) in tRNA + (6R)-5,10-methylene-5,6,7,8-tetrahydrofolate + NADH + H(+) = 5-methyluridine(54) in tRNA + (6S)-5,6,7,8-tetrahydrofolate + NAD(+). It catalyses the reaction uridine(54) in tRNA + (6R)-5,10-methylene-5,6,7,8-tetrahydrofolate + NADPH + H(+) = 5-methyluridine(54) in tRNA + (6S)-5,6,7,8-tetrahydrofolate + NADP(+). In terms of biological role, catalyzes the folate-dependent formation of 5-methyl-uridine at position 54 (M-5-U54) in all tRNAs. The chain is Methylenetetrahydrofolate--tRNA-(uracil-5-)-methyltransferase TrmFO from Prochlorococcus marinus subsp. pastoris (strain CCMP1986 / NIES-2087 / MED4).